The primary structure comprises 500 residues: Toluene-4-monooxygenase system, hydroxylase component subunit alpha (500 aa).

Positions 104, 134, 137, 197, 231, and 234 each coordinate Fe cation.

Belongs to the TmoA/XamoA family. The alkene monooxygenase multicomponent enzyme system is composed of an electron transfer component and a monooxygenase component interacting with the effector protein TmoD. The electron transfer component is composed of a ferredoxin reductase (TmoF) and a ferredoxin (TmoC), and the monooxygenase component is formed by a heterohexamer (dimer of heterotrimers) of two alpha subunits (TmoA), two beta subunits (TmoE) and two gamma subunits (TmoB). Fe(2+) serves as cofactor.

The enzyme catalyses toluene + NADH + O2 + H(+) = 4-methylphenol + NAD(+) + H2O. It participates in xenobiotic degradation; toluene degradation. With respect to regulation, inhibited by Zn(2+) and Cu(2+). Functionally, component of the toluene-4-monooxygenase multicomponent enzyme system which catalyzes the O2- and NADH-dependent hydroxylation of toluene to form p-cresol. Also able to convert benzene to phenol, catechol, and 1,2,3-trihydroxybenzene by successive hydroxylations. In Ectopseudomonas mendocina (Pseudomonas mendocina), this protein is Toluene-4-monooxygenase system, hydroxylase component subunit alpha.